Here is a 496-residue protein sequence, read N- to C-terminus: NAD(P)H-quinone oxidoreductase subunit 2 A, chloroplastic (496 aa).

Transmembrane regions (helical) follow at residues 13 to 33 (SILP…IDLL), 41 to 61 (TFWS…ILLL), 83 to 103 (IFRF…VDYI), 110 to 130 (VTEF…LCGA), 133 to 153 (LISI…LSGY), 168 to 188 (LLMG…PYGL), 213 to 233 (VSIA…LVPF), 245 to 265 (PTPV…ALAT), 279 to 299 (WHLP…LIAV), 307 to 327 (MLAY…IAGD), 338 to 358 (YMLI…SFGL), 380 to 400 (LSLV…GFFG), 413 to 435 (LYFL…SRII), and 470 to 490 (MILC…IIAI).

Belongs to the complex I subunit 2 family. As to quaternary structure, NDH is composed of at least 16 different subunits, 5 of which are encoded in the nucleus.

The protein localises to the plastid. It localises to the chloroplast thylakoid membrane. The catalysed reaction is a plastoquinone + NADH + (n+1) H(+)(in) = a plastoquinol + NAD(+) + n H(+)(out). It carries out the reaction a plastoquinone + NADPH + (n+1) H(+)(in) = a plastoquinol + NADP(+) + n H(+)(out). In terms of biological role, NDH shuttles electrons from NAD(P)H:plastoquinone, via FMN and iron-sulfur (Fe-S) centers, to quinones in the photosynthetic chain and possibly in a chloroplast respiratory chain. The immediate electron acceptor for the enzyme in this species is believed to be plastoquinone. Couples the redox reaction to proton translocation, and thus conserves the redox energy in a proton gradient. The sequence is that of NAD(P)H-quinone oxidoreductase subunit 2 A, chloroplastic from Psilotum nudum (Whisk fern).